The following is a 217-amino-acid chain: PRA1 family protein B3 (217 aa).

The disordered stretch occupies residues 1–24; sequence MMANPPTLPISDHSGGGSQSQQPV. Helical transmembrane passes span 76–96, 98–118, 138–158, 162–182, and 193–213; these read LPYF…LSLL, HPFS…LYLF, LGVL…GSLL, LMIG…EDLF, and LLSF…STPA.

The protein belongs to the PRA1 family. In terms of assembly, interacts with PRA1B1, PRA1B2, PRA1B4, PRA1B5, PRA1B6 and PRA1E. In terms of tissue distribution, expressed in hypocotyls and shoot apex.

It is found in the endosome membrane. In terms of biological role, may be involved in both secretory and endocytic intracellular trafficking in the endosomal/prevacuolar compartments. This Arabidopsis thaliana (Mouse-ear cress) protein is PRA1 family protein B3 (PRA1B3).